The following is a 467-amino-acid chain: 3-isopropylmalate dehydratase large subunit (467 aa).

[4Fe-4S] cluster is bound by residues Cys347, Cys407, and Cys410.

Belongs to the aconitase/IPM isomerase family. LeuC type 1 subfamily. As to quaternary structure, heterodimer of LeuC and LeuD. Requires [4Fe-4S] cluster as cofactor.

The enzyme catalyses (2R,3S)-3-isopropylmalate = (2S)-2-isopropylmalate. Its pathway is amino-acid biosynthesis; L-leucine biosynthesis; L-leucine from 3-methyl-2-oxobutanoate: step 2/4. Catalyzes the isomerization between 2-isopropylmalate and 3-isopropylmalate, via the formation of 2-isopropylmaleate. This chain is 3-isopropylmalate dehydratase large subunit, found in Picosynechococcus sp. (strain ATCC 27264 / PCC 7002 / PR-6) (Agmenellum quadruplicatum).